Here is a 191-residue protein sequence, read N- to C-terminus: Somatotropin (191 aa).

His20 lines the Zn(2+) pocket. A disulfide bridge links Cys53 with Cys164. Glu173 serves as a coordination point for Zn(2+). The cysteines at positions 181 and 189 are disulfide-linked.

The protein belongs to the somatotropin/prolactin family.

It is found in the secreted. In terms of biological role, growth hormone plays an important role in growth control and is involved in the regulation of several anabolic processes. Implicated as an osmoregulatory substance important for seawater adaptation. This is Somatotropin (GH) from Chelonia mydas (Green sea-turtle).